The primary structure comprises 190 residues: Pyridoxamine 5'-phosphate oxidase C1952.08c homolog (190 aa).

FMN is bound by residues Ser62 and Lys69.

This sequence belongs to the pyridoxamine 5'-phosphate oxidase family. It depends on FMN as a cofactor.

The protein resides in the cytoplasm. It localises to the nucleus. This Schizosaccharomyces pombe (strain 972 / ATCC 24843) (Fission yeast) protein is Pyridoxamine 5'-phosphate oxidase C1952.08c homolog.